We begin with the raw amino-acid sequence, 569 residues long: Matrix metalloproteinase-21 (569 aa).

The signal sequence occupies residues 1–24; the sequence is MLAASIFRPTLLLCWLAAPWPTQP. Positions 25–144 are excised as a propeptide; sequence ESLFHSRDRS…GPPPRARSRR (120 aa). The Cysteine switch signature appears at 115–122; it reads PRCGVPDM. The tract at residues 115–166 is disordered; that stretch reads PRCGVPDMRPPPPSAPPSPPGPPPRARSRRSPRAPLSLSRRGWQPRGYPDGG. Position 117 (cysteine 117) interacts with Zn(2+). A compositionally biased stretch (pro residues) spans 122–139; it reads MRPPPPSAPPSPPGPPPR. Residues 147–156 are compositionally biased toward low complexity; sequence RAPLSLSRRG. Histidine 283 is a Zn(2+) binding site. Residue glutamate 284 is part of the active site. 2 residues coordinate Zn(2+): histidine 287 and histidine 293. A disulfide bond links cysteine 329 and cysteine 560. Hemopexin repeat units follow at residues 330–389, 391–447, 448–496, and 503–559; these read EGSF…WPGI, THNI…FPGI, PSPL…FPAV, and FRNI…WFDV. An N-linked (GlcNAc...) asparagine glycan is attached at asparagine 372.

Belongs to the peptidase M10A family. Zn(2+) serves as cofactor. Ca(2+) is required as a cofactor. Post-translationally, the precursor is cleaved by a furin endopeptidase. As to expression, identified in fetal brain, kidney and liver. In adult tissues found primarily in ovary, kidney, liver, lung, placenta, brain and peripheral blood leukocytes. Expressed as well in various cancer cell lines.

The protein resides in the secreted. Plays a specialized role in the generation of left-right asymmetry during embryogenesis. May act as a negative regulator of the NOTCH-signaling pathway. Cleaves alpha-1-antitrypsin. The sequence is that of Matrix metalloproteinase-21 (MMP21) from Homo sapiens (Human).